Here is a 416-residue protein sequence, read N- to C-terminus: Enterobactin exporter EntS (416 aa).

The Cytoplasmic segment spans residues 1–21 (MNKQSWLLNLSLLKTHPAFRA). The helical transmembrane segment at 22–42 (VFLARFISIVSLGLLGVAVPV) threads the bilayer. Over 43–55 (QIQMMTHSTWQVG) the chain is Periplasmic. A helical transmembrane segment spans residues 56 to 76 (LSVTLTGGAMFVGLMVGGVLA). Residues 77–83 (DRYERKK) lie on the Cytoplasmic side of the membrane. A helical membrane pass occupies residues 84 to 104 (VILLARGTCGIGFIGLCLNAL). Residues 105–109 (LPEPS) are Periplasmic-facing. The chain crosses the membrane as a helical span at residues 110-130 (LLAIYLLGLWDGFFASLGVTA). At 131–156 (LLAATPALVGRENLMQAGAITMLTVR) the chain is on the cytoplasmic side. Residues 157 to 177 (LGSVISPMIGGLLLATGGVAW) form a helical membrane-spanning segment. A topological domain (periplasmic) is located at residue Asn-178. Residues 179 to 199 (YGLAAAGTFITLLPLLSLPAL) traverse the membrane as a helical segment. The Cytoplasmic segment spans residues 200-218 (PPPPQPREHPLKSLLAGFR). A helical membrane pass occupies residues 219–239 (FLLASPLVGGIALLGGLLTMA). At 240–256 (SAVRVLYPALADNWQMS) the chain is on the periplasmic side. Residues 257–277 (AAQIGFLYAAIPLGAAIGALT) traverse the membrane as a helical segment. Topologically, residues 278–287 (SGKLAHSVRP) are cytoplasmic. Residues 288-307 (GLLMLLSTLGAFLAIGLFGL) form a helical membrane-spanning segment. Topologically, residues 308–313 (MPMWIL) are periplasmic. The helical transmembrane segment at 314–336 (GVVCLALFGWLSAVSSLLQYTML) threads the bilayer. The Cytoplasmic portion of the chain corresponds to 337–356 (QTQTPEAMLGRINGLWTAQN). A helical membrane pass occupies residues 357-377 (VTGDAIGAALLGGLGAMMTPV). A topological domain (periplasmic) is located at residue Ala-378. Residues 379–399 (SASASGFGLLIIGVLLLLVLV) traverse the membrane as a helical segment. Residues 400-416 (ELRRFRQTPPQVTASGS) are Cytoplasmic-facing.

Belongs to the major facilitator superfamily. EntS (TC 2.A.1.38) family.

It is found in the cell inner membrane. Component of an export pathway for enterobactin. This is Enterobactin exporter EntS from Escherichia coli O6:K15:H31 (strain 536 / UPEC).